The following is a 237-amino-acid chain: UPF0758 protein Veis_1654 (237 aa).

The 123-residue stretch at 115-237 (VFDTPDAVKH…ALSMAEMGLL (123 aa)) folds into the MPN domain. 3 residues coordinate Zn(2+): histidine 186, histidine 188, and aspartate 199. The JAMM motif signature appears at 186–199 (HNHPSGSVQPSRAD).

It belongs to the UPF0758 family.

In Verminephrobacter eiseniae (strain EF01-2), this protein is UPF0758 protein Veis_1654.